Reading from the N-terminus, the 104-residue chain is Phosphocarrier protein HPr (104 aa).

The region spanning 17–104 (ELSAIFMIRN…EVFNSGFGEL (88 aa)) is the HPr domain. The active-site Pros-phosphohistidine intermediate is the H31.

Belongs to the HPr family.

It localises to the cytoplasm. In terms of biological role, general (non sugar-specific) component of the phosphoenolpyruvate-dependent sugar phosphotransferase system (sugar PTS). This major carbohydrate active-transport system catalyzes the phosphorylation of incoming sugar substrates concomitantly with their translocation across the cell membrane. The phosphoryl group from phosphoenolpyruvate (PEP) is transferred to the phosphoryl carrier protein HPr by enzyme I. Phospho-HPr then transfers it to the PTS EIIA domain. This Chlamydia muridarum (strain MoPn / Nigg) protein is Phosphocarrier protein HPr (ptsH).